Consider the following 338-residue polypeptide: Ketol-acid reductoisomerase (NADP(+)) (338 aa).

Positions M1–T181 constitute a KARI N-terminal Rossmann domain. NADP(+) is bound by residues F24–Q27, R47, S52, and D82–Q85. Residue H107 is part of the active site. NADP(+) is bound at residue G133. The KARI C-terminal knotted domain occupies T182 to I327. Positions 190, 194, 226, and 230 each coordinate Mg(2+). S251 provides a ligand contact to substrate.

It belongs to the ketol-acid reductoisomerase family. The cofactor is Mg(2+).

It catalyses the reaction (2R)-2,3-dihydroxy-3-methylbutanoate + NADP(+) = (2S)-2-acetolactate + NADPH + H(+). The catalysed reaction is (2R,3R)-2,3-dihydroxy-3-methylpentanoate + NADP(+) = (S)-2-ethyl-2-hydroxy-3-oxobutanoate + NADPH + H(+). It participates in amino-acid biosynthesis; L-isoleucine biosynthesis; L-isoleucine from 2-oxobutanoate: step 2/4. Its pathway is amino-acid biosynthesis; L-valine biosynthesis; L-valine from pyruvate: step 2/4. Functionally, involved in the biosynthesis of branched-chain amino acids (BCAA). Catalyzes an alkyl-migration followed by a ketol-acid reduction of (S)-2-acetolactate (S2AL) to yield (R)-2,3-dihydroxy-isovalerate. In the isomerase reaction, S2AL is rearranged via a Mg-dependent methyl migration to produce 3-hydroxy-3-methyl-2-ketobutyrate (HMKB). In the reductase reaction, this 2-ketoacid undergoes a metal-dependent reduction by NADPH to yield (R)-2,3-dihydroxy-isovalerate. This chain is Ketol-acid reductoisomerase (NADP(+)), found in Sulfurimonas denitrificans (strain ATCC 33889 / DSM 1251) (Thiomicrospira denitrificans (strain ATCC 33889 / DSM 1251)).